The primary structure comprises 452 residues: Metacaspase-1 (452 aa).

The disordered stretch occupies residues 1–97 (MYPGAGRPTY…GPPLQGRPRD (97 aa)). Residues 16-41 (QKGPYGQPQYQQQYAPPYPERYQQPY) show a composition bias toward low complexity. Catalysis depends on residues His238 and Cys294.

This sequence belongs to the peptidase C14B family.

Its function is as follows. Involved in cell death (apoptosis). This is Metacaspase-1 (MCA1) from Eremothecium gossypii (strain ATCC 10895 / CBS 109.51 / FGSC 9923 / NRRL Y-1056) (Yeast).